Here is a 228-residue protein sequence, read N- to C-terminus: L-ribulose-5-phosphate 4-epimerase UlaF (228 aa).

Residues 26–27, 43–44, and 72–73 contribute to the substrate site; these read GN, SG, and SS. 3 residues coordinate Zn(2+): D74, H93, and H95. D118 functions as the Proton donor/acceptor in the catalytic mechanism. H167 is a binding site for Zn(2+). Y225 functions as the Proton donor/acceptor in the catalytic mechanism.

It belongs to the aldolase class II family. AraD/FucA subfamily. Zn(2+) is required as a cofactor.

The catalysed reaction is L-ribulose 5-phosphate = D-xylulose 5-phosphate. Its pathway is cofactor degradation; L-ascorbate degradation; D-xylulose 5-phosphate from L-ascorbate: step 4/4. Catalyzes the isomerization of L-ribulose 5-phosphate to D-xylulose 5-phosphate. Is involved in the anaerobic L-ascorbate utilization. This Escherichia coli (strain 55989 / EAEC) protein is L-ribulose-5-phosphate 4-epimerase UlaF.